The following is a 443-amino-acid chain: Flavastacin (443 aa).

Positions 1–15 (MTRKLLILSGCLILA) are cleaved as a signal peptide. Residues 16–91 (LNSCKSDMET…ANPDISTVER (76 aa)) constitute a propeptide, activation peptide. In terms of domain architecture, Peptidase M12A spans 92–289 (STIVSSFIKT…AGINHLYGPV (198 aa)). H189 lines the Zn(2+) pocket. E190 is a catalytic residue. Residues H193 and H199 each contribute to the Zn(2+) site. The region spanning 297–440 (GTYTLTTSLA…PYTKQRFTLT (144 aa)) is the Ricin B-type lectin domain. The O-linked (Man...) serine glycan is linked to S355.

Requires Zn(2+) as cofactor. Post-translationally, O-linked glycan consists of the Man, GlcNAc, GlcU, Glc, GlcU, Rha, Man heptasaccharide.

The enzyme catalyses Hydrolyzes polypeptides on the amino-side of Asp in -Xaa-|-Asp-. Acts very slowly on -Xaa-|-Glu.. Zinc metallendopeptidase that cleaves preferentially on N-terminal side of aspartate-containing substrates. In Elizabethkingia meningoseptica (Chryseobacterium meningosepticum), this protein is Flavastacin.